Here is a 271-residue protein sequence, read N- to C-terminus: Phosphatidylglycerol--prolipoprotein diacylglyceryl transferase (271 aa).

Transmembrane regions (helical) follow at residues 18-38, 51-71, 89-109, and 115-135; these read LSVH…LWMA, IFID…RAYY, IWKG…TGIV, and GISF…GQAI. Residue Arg-137 participates in a 1,2-diacyl-sn-glycero-3-phospho-(1'-sn-glycerol) binding. Transmembrane regions (helical) follow at residues 177–197, 205–225, and 236–256; these read HPTF…LLLL, GNLF…IEGM, and LRIA…LMIF.

The protein belongs to the Lgt family.

The protein localises to the cell membrane. The catalysed reaction is L-cysteinyl-[prolipoprotein] + a 1,2-diacyl-sn-glycero-3-phospho-(1'-sn-glycerol) = an S-1,2-diacyl-sn-glyceryl-L-cysteinyl-[prolipoprotein] + sn-glycerol 1-phosphate + H(+). Its pathway is protein modification; lipoprotein biosynthesis (diacylglyceryl transfer). Functionally, catalyzes the transfer of the diacylglyceryl group from phosphatidylglycerol to the sulfhydryl group of the N-terminal cysteine of a prolipoprotein, the first step in the formation of mature lipoproteins. This Bacillus velezensis (strain DSM 23117 / BGSC 10A6 / LMG 26770 / FZB42) (Bacillus amyloliquefaciens subsp. plantarum) protein is Phosphatidylglycerol--prolipoprotein diacylglyceryl transferase.